Consider the following 223-residue polypeptide: Small ribosomal subunit protein uS3 (223 aa).

Positions 39 to 108 constitute a KH type-2 domain; that stretch reads IRKFVKKKGA…VILINIVEVK (70 aa).

Belongs to the universal ribosomal protein uS3 family. Part of the 30S ribosomal subunit. Forms a tight complex with proteins S10 and S14.

Binds the lower part of the 30S subunit head. Binds mRNA in the 70S ribosome, positioning it for translation. This is Small ribosomal subunit protein uS3 from Clostridium kluyveri (strain NBRC 12016).